The following is an 830-amino-acid chain: Eisosome protein 1 (830 aa).

Disordered regions lie at residues 1 to 29 (MSLVSAVTGDESRDTNGAEQSSVYQSAGK), 128 to 156 (RSRTSSTASTTVTYVNSSSSSPLHSKTPK), and 650 to 830 (GEFL…KEVF). Low complexity-rich tracts occupy residues 128 to 148 (RSRTSSTASTTVTYVNSSSSS) and 741 to 761 (TKTTQPTPLKSSPKPSNKPVT). Residues 810-830 (EGGKEEPTSKDNRKSLFKEVF) show a composition bias toward basic and acidic residues.

This sequence belongs to the EIS1 family.

Its subcellular location is the cytoplasmic granule. The protein localises to the cell membrane. Its function is as follows. Required for normal formation of eisosomes, large cytoplasmic protein assemblies that localize to specialized domains on plasma membrane and mark the site of endocytosis. This chain is Eisosome protein 1 (EIS1), found in Kluyveromyces lactis (strain ATCC 8585 / CBS 2359 / DSM 70799 / NBRC 1267 / NRRL Y-1140 / WM37) (Yeast).